The chain runs to 162 residues: Disulfide bond formation protein B (162 aa).

At 1-8 the chain is on the cytoplasmic side; that stretch reads MTPLFRKA. The chain crosses the membrane as a helical span at residues 9 to 25; the sequence is VWLLFAVSVCAFAGSLA. Residues 26–43 lie on the Periplasmic side of the membrane; that stretch reads AQYVLGMEPCVLCISQRL. Cysteines 35 and 38 form a disulfide. Residues 44–60 traverse the membrane as a helical segment; it reads CVLATALCAAIVLMCRP. Over 61-67 the chain is Cytoplasmic; the sequence is RRKAGGL. A helical membrane pass occupies residues 68-85; sequence FGAVFISIPAVTGISVAA. The Periplasmic portion of the chain corresponds to 86 to 141; that stretch reads YQLWLQSLPPGTAPSCGAPWTFRLKGWPLFDWFEPVVRGFGNCAEPDYLLGVALPV. Cys101 and Cys128 are joined by a disulfide. A helical transmembrane segment spans residues 142–160; it reads WSVAYFLAVALTVWWAWAR. Over 161-162 the chain is Cytoplasmic; sequence AK.

This sequence belongs to the DsbB family.

Its subcellular location is the cell inner membrane. In terms of biological role, required for disulfide bond formation in some periplasmic proteins. Acts by oxidizing the DsbA protein. The polypeptide is Disulfide bond formation protein B (Neisseria meningitidis serogroup A / serotype 4A (strain DSM 15465 / Z2491)).